Reading from the N-terminus, the 154-residue chain is 6,7-dimethyl-8-ribityllumazine synthase (154 aa).

Residues phenylalanine 26, 60–62 (ALE), and 84–86 (CII) each bind 5-amino-6-(D-ribitylamino)uracil. 89–90 (ET) is a (2S)-2-hydroxy-3-oxobutyl phosphate binding site. Residue histidine 92 is the Proton donor of the active site. Position 117 (asparagine 117) interacts with 5-amino-6-(D-ribitylamino)uracil. Arginine 131 contributes to the (2S)-2-hydroxy-3-oxobutyl phosphate binding site.

The protein belongs to the DMRL synthase family.

It carries out the reaction (2S)-2-hydroxy-3-oxobutyl phosphate + 5-amino-6-(D-ribitylamino)uracil = 6,7-dimethyl-8-(1-D-ribityl)lumazine + phosphate + 2 H2O + H(+). It participates in cofactor biosynthesis; riboflavin biosynthesis; riboflavin from 2-hydroxy-3-oxobutyl phosphate and 5-amino-6-(D-ribitylamino)uracil: step 1/2. In terms of biological role, catalyzes the formation of 6,7-dimethyl-8-ribityllumazine by condensation of 5-amino-6-(D-ribitylamino)uracil with 3,4-dihydroxy-2-butanone 4-phosphate. This is the penultimate step in the biosynthesis of riboflavin. The sequence is that of 6,7-dimethyl-8-ribityllumazine synthase from Leptothrix cholodnii (strain ATCC 51168 / LMG 8142 / SP-6) (Leptothrix discophora (strain SP-6)).